We begin with the raw amino-acid sequence, 542 residues long: Chondroitin sulfate N-acetylgalactosaminyltransferase 2 (542 aa).

Topologically, residues 1-13 (MSRRGSILHSRTQ) are cytoplasmic. Residues 14-34 (WLLLGLALLFSLVLFMYLLEC) form a helical; Signal-anchor for type II membrane protein membrane-spanning segment. Topologically, residues 35 to 542 (APQTDGNASL…AYRTNSETAG (508 aa)) are lumenal. N41 carries N-linked (GlcNAc...) asparagine glycosylation. A coiled-coil region spans residues 59-105 (ALLQEQEEHYQTRATSLKRQIAQLKQELQDMSEKMRALQERKKLGAN). N333 is a glycosylation site (N-linked (GlcNAc...) asparagine). Positions 369 and 486 each coordinate a divalent metal cation.

It belongs to the chondroitin N-acetylgalactosaminyltransferase family.

The protein localises to the golgi apparatus. The protein resides in the golgi stack membrane. The enzyme catalyses 3-O-(beta-D-GlcA-(1-&gt;3)-beta-D-Gal-(1-&gt;3)-beta-D-Gal-(1-&gt;4)-beta-D-Xyl)-L-seryl-[protein] + UDP-N-acetyl-alpha-D-galactosamine = 3-O-(beta-D-GalNAc-(1-&gt;4)-beta-D-GlcA-(1-&gt;3)-beta-D-Gal-(1-&gt;3)-beta-D-Gal-(1-&gt;4)-beta-D-Xyl)-L-seryl-[protein] + UDP + H(+). Its function is as follows. Transfers 1,4-N-acetylgalactosamine (GalNAc) from UDP-GalNAc to the non-reducing end of glucuronic acid (GlcUA). Required for addition of the first GalNAc to the core tetrasaccharide linker and for elongation of chondroitin chains. The sequence is that of Chondroitin sulfate N-acetylgalactosaminyltransferase 2 (Csgalnact2) from Mus musculus (Mouse).